We begin with the raw amino-acid sequence, 303 residues long: Albumin b-32 (303 aa).

Positions 112-137 (ATPTSSATTPGGSASAAGTRTSSATR) are enriched in low complexity. Positions 112-175 (ATPTSSATTP…GGGGADADAD (64 aa)) are disordered. The span at 146–156 (ARDDQGRQRPG) shows a compositional bias: basic and acidic residues.

It belongs to the ribosome-inactivating protein family. Type 1 RIP subfamily. Monomer. In terms of tissue distribution, endosperm.

It is found in the cytoplasm. The enzyme catalyses Endohydrolysis of the N-glycosidic bond at one specific adenosine on the 28S rRNA.. Its function is as follows. A possible regulatory factor for the synthesis of zeins, the major group of storage proteins. The protein is Albumin b-32 (O6) of Zea mays (Maize).